The sequence spans 513 residues: V-type proton ATPase subunit B, kidney isoform (513 aa).

Residues 1-18 (MATTVDSRSSGFTGNSCD) show a composition bias toward polar residues. The segment at 1 to 21 (MATTVDSRSSGFTGNSCDPGT) is disordered. Residue arginine 394 coordinates ATP. The PDZ-binding motif lies at 510–513 (DTAL).

The protein belongs to the ATPase alpha/beta chains family. In terms of assembly, V-ATPase is a heteromultimeric enzyme made up of two complexes: the ATP-hydrolytic V1 complex and the proton translocation V0 complex. The V1 complex consists of three catalytic AB heterodimers that form a heterohexamer, three peripheral stalks each consisting of EG heterodimers, one central rotor including subunits D and F, and the regulatory subunits C and H. The proton translocation complex V0 consists of the proton transport subunit a, a ring of proteolipid subunits c9c'', rotary subunit d, subunits e and f, and the accessory subunits ATP6AP1/Ac45 and ATP6AP2/PRR. Forms a complex with NHERF1 and SCL4A7. Highly expressed in the kidney; found in early distal nephron, encompassing thick ascending limbs and distal convoluted tubules and in the alpha-intercalated cells of the cortical collecting ducts (at protein level). Expressed in the olfactory epithelium (at protein level). Expressed at lower levels in the testis.

It is found in the apical cell membrane. It localises to the basolateral cell membrane. Its function is as follows. Non-catalytic subunit of the V1 complex of vacuolar(H+)-ATPase (V-ATPase), a multisubunit enzyme composed of a peripheral complex (V1) that hydrolyzes ATP and a membrane integral complex (V0) that translocates protons. V-ATPase is responsible for acidifying and maintaining the pH of intracellular compartments and in some cell types, is targeted to the plasma membrane, where it is responsible for acidifying the extracellular environment. Essential for the proper assembly and activity of V-ATPase. In renal intercalated cells, mediates secretion of protons (H+) into the urine thereby ensuring correct urinary acidification. Required for optimal olfactory function by mediating the acidification of the nasal olfactory epithelium. In Mus musculus (Mouse), this protein is V-type proton ATPase subunit B, kidney isoform (Atp6v1b1).